We begin with the raw amino-acid sequence, 264 residues long: Protein DSE2 (264 aa).

Residues 1–23 (MQFKKSSIVSFLSLLGSLTKAAA) form the signal peptide. Over residues 75–92 (TRESVVTSTLSSTSLLPE) the composition is skewed to low complexity. The interval 75-213 (TRESVVTSTL…STSTSSSSVL (139 aa)) is disordered. A compositionally biased stretch (acidic residues) spans 93–104 (TTEESTQEDEQT). Low complexity-rich tracts occupy residues 105 to 147 (TDFT…PTTS), 157 to 168 (STSVITTKSTSK), and 178 to 211 (TSTL…SSSS). The GPI-anchor amidated aspartate moiety is linked to residue aspartate 247. Positions 248–264 (AATTYTKTRTVYATISS) are cleaved as a propeptide — removed in mature form.

The protein localises to the secreted. The protein resides in the cell wall. Its subcellular location is the membrane. Its function is as follows. Involved in pseudohyphal growth, cell wall metabolism and required for the separation of the mother and daughter cells. The protein is Protein DSE2 (DSE2) of Kluyveromyces lactis (strain ATCC 8585 / CBS 2359 / DSM 70799 / NBRC 1267 / NRRL Y-1140 / WM37) (Yeast).